The chain runs to 476 residues: Aspartyl/glutamyl-tRNA(Asn/Gln) amidotransferase subunit B (476 aa).

This sequence belongs to the GatB/GatE family. GatB subfamily. In terms of assembly, heterotrimer of A, B and C subunits.

It carries out the reaction L-glutamyl-tRNA(Gln) + L-glutamine + ATP + H2O = L-glutaminyl-tRNA(Gln) + L-glutamate + ADP + phosphate + H(+). The catalysed reaction is L-aspartyl-tRNA(Asn) + L-glutamine + ATP + H2O = L-asparaginyl-tRNA(Asn) + L-glutamate + ADP + phosphate + 2 H(+). In terms of biological role, allows the formation of correctly charged Asn-tRNA(Asn) or Gln-tRNA(Gln) through the transamidation of misacylated Asp-tRNA(Asn) or Glu-tRNA(Gln) in organisms which lack either or both of asparaginyl-tRNA or glutaminyl-tRNA synthetases. The reaction takes place in the presence of glutamine and ATP through an activated phospho-Asp-tRNA(Asn) or phospho-Glu-tRNA(Gln). The protein is Aspartyl/glutamyl-tRNA(Asn/Gln) amidotransferase subunit B of Latilactobacillus sakei subsp. sakei (strain 23K) (Lactobacillus sakei subsp. sakei).